Here is a 307-residue protein sequence, read N- to C-terminus: Probable GTP 3',8-cyclase (307 aa).

One can recognise a Radical SAM core domain in the interval 4 to 222 (ALGREVRSVR…RTFHSREVYR (219 aa)). R13 is a binding site for GTP. The [4Fe-4S] cluster site is built by C20 and C24. Y26 lines the S-adenosyl-L-methionine pocket. [4Fe-4S] cluster is bound at residue C27. Position 60 (K60) interacts with GTP. Residues G64 and S112 each coordinate S-adenosyl-L-methionine. Position 150 (K150) interacts with GTP. [4Fe-4S] cluster is bound by residues C240 and C243. 245–247 (RIR) contacts GTP. Residue C257 participates in [4Fe-4S] cluster binding.

It belongs to the radical SAM superfamily. MoaA family. [4Fe-4S] cluster is required as a cofactor.

It carries out the reaction GTP + AH2 + S-adenosyl-L-methionine = (8S)-3',8-cyclo-7,8-dihydroguanosine 5'-triphosphate + 5'-deoxyadenosine + L-methionine + A + H(+). It functions in the pathway cofactor biosynthesis; molybdopterin biosynthesis. In terms of biological role, catalyzes the cyclization of GTP to (8S)-3',8-cyclo-7,8-dihydroguanosine 5'-triphosphate. The polypeptide is Probable GTP 3',8-cyclase (Methanopyrus kandleri (strain AV19 / DSM 6324 / JCM 9639 / NBRC 100938)).